Consider the following 351-residue polypeptide: MDAFRRQASKLRDQVAKQQLAVIKQFSGTGYESSDVMVIDELEMQRHHQLDKLYRSTRSAKEFQRDIVKAAEAFTTIGLRHIEAGTKLSEDCCRYGNENSQNIDENILAKAAAIYGDARKHVDKEQEDFNKLLASQVLDPLRAMVAGSPLEDARHLAQRYSRMRQEAETHATEVSRRQARVREAPIPENVAKLQLAEAKMQELKANMAVLGKEATAALAAVESQQHRLTFQRLVAMVEGEKNYHLRIAAILSDIEAEMVTEKQHKESAPPAIPTENGSEKTSYFLAEVIHPFSAASEKELDLDKGDYIVVRKVSQTGWAEGECKGKAGWFPMAYIEKRQRLPTTNFAAEVY.

Coiled-coil stretches lie at residues 1-21 (MDAF…QQLA) and 193-213 (LQLA…LGKE). One can recognise a BAR domain in the interval 31–267 (YESSDVMVID…MVTEKQHKES (237 aa)). The SH3 domain occupies 281–340 (TSYFLAEVIHPFSAASEKELDLDKGDYIVVRKVSQTGWAEGECKGKAGWFPMAYIEKRQR).

In terms of assembly, interacts with FREE1. Interacts (via SH3 domain) with DRP2A/ADL6. Binds to SH3P2. In terms of tissue distribution, detected in all tissues except seedlings.

The protein localises to the cytoplasmic vesicle. It is found in the clathrin-coated vesicle. May be involved in the recruitment of DRP2A to the accessory protein complex and in the negative regulation of its GTPase activity. The sequence is that of SH3 domain-containing protein 3 from Arabidopsis thaliana (Mouse-ear cress).